The following is a 364-amino-acid chain: Dihydroorotase (364 aa).

Zn(2+)-binding residues include His14, His16, Lys98, His137, His180, and Asp258. An N6-carboxylysine modification is found at Lys98.

This sequence belongs to the metallo-dependent hydrolases superfamily. DHOase family. Class II DHOase subfamily. Requires Zn(2+) as cofactor.

The catalysed reaction is (S)-dihydroorotate + H2O = N-carbamoyl-L-aspartate + H(+). Its pathway is pyrimidine metabolism; UMP biosynthesis via de novo pathway; (S)-dihydroorotate from bicarbonate: step 3/3. Functionally, catalyzes the conversion of ureidosuccinic acid (USA) to dihydroorotate, the third step of the de novo pyrimidine biosynthetic pathway. The polypeptide is Dihydroorotase (URA4) (Saccharomyces cerevisiae (strain ATCC 204508 / S288c) (Baker's yeast)).